We begin with the raw amino-acid sequence, 37 residues long: Chorion class CB protein PCH12 (37 aa).

The central domain stretch occupies residues D1 to E26. Residues T27–A37 form a right arm region.

The protein belongs to the chorion protein family.

This protein is one of many from the eggshell of the silk moth. The protein is Chorion class CB protein PCH12 of Antheraea polyphemus (Polyphemus moth).